Here is a 280-residue protein sequence, read N- to C-terminus: Protein synthesis inhibitor II (280 aa).

Ala-1 bears the N-acetylalanine mark. Glu-174 is an active-site residue.

The protein belongs to the ribosome-inactivating protein family. Type 1 RIP subfamily.

It is found in the cytoplasm. The enzyme catalyses Endohydrolysis of the N-glycosidic bond at one specific adenosine on the 28S rRNA.. Inhibits the elongation phase of protein synthesis. It inactivates fungal ribosomes even more effectively than mammalian ribosomes and is thought to function as a constitutive antifungal agent in plants. In Hordeum vulgare (Barley), this protein is Protein synthesis inhibitor II (RIP30A).